The sequence spans 276 residues: 3' cyclic ADP-D-ribose synthase HopAM1 (276 aa).

The span at 20 to 38 (VEASQVKSAGTSSTTNIDS) shows a compositional bias: polar residues. Positions 20–39 (VEASQVKSAGTSSTTNIDSK) are disordered. The TIR domain stretch occupies residues 165–214 (KNGIAHAKKMAFFITPEWLGSDFCKQEFQWLSETKNKDIKSAFVIFKDVD). Glutamine 190 is a catalytic residue.

In terms of assembly, homodimer.

The protein localises to the host cytoplasm. It localises to the host cytosol. The enzyme catalyses NAD(+) = 3'cADPR + nicotinamide + H(+). In terms of biological role, NAD(+) hydrolase (NADase) that cleaves NAD(+) into nicotinamide and 3' cyclic ADP-D-ribose (3'cADPR, v2-cADPR). Upon infiltration of A.thaliana with this bacteria an effector-triggered immunity-like phenotype (ETI-like, cell death with severe chlorosis) is seen, 3'cADPR levels rise while NAD(+) levels remain constant. Plant immune responses are suppressed. Triggers hypersensitive response-like cell death in Nicotiana tabacum cv. Xanthi and N.benthamiana when transiently expressed, depletes NAD(+) in N.benthamiana. Causes cell death upon induction in yeast due to NAD(+) depletion and/or 3'cADPR itself. Transgenic A.thaliana expressing HopAM1 suppresses its plant immune system upon challenge; the plants produce 3'cADPR without significantly depleting NAD(+). The chain is 3' cyclic ADP-D-ribose synthase HopAM1 from Pseudomonas syringae pv. tomato (strain ATCC BAA-871 / DC3000).